A 103-amino-acid polypeptide reads, in one-letter code: Endoribonuclease MazF3 (103 aa).

Belongs to the PemK/MazF family. As to quaternary structure, forms a complex with cognate antitoxin MazE3.

Functionally, toxic component of a type II toxin-antitoxin (TA) system. Acts as an endoribonuclease, cleaving in U-rich regions. Neutralized by cognate antitoxin MazE3. This chain is Endoribonuclease MazF3 (mazF3), found in Mycobacterium tuberculosis (strain CDC 1551 / Oshkosh).